Reading from the N-terminus, the 311-residue chain is Olfactory receptor 2A5 (311 aa).

Over 1 to 24 (MTKNQTWVTEFILLGFPLSLRIQM) the chain is Extracellular. Residue Asn4 is glycosylated (N-linked (GlcNAc...) asparagine). Residues 25–48 (LLSGLFSLLYVFTLLGNGAILGLI) traverse the membrane as a helical segment. The Cytoplasmic segment spans residues 49–56 (WLDSRLHT). A helical transmembrane segment spans residues 57 to 78 (PMYFFLSHLAIIDISYASNNVP). The Extracellular portion of the chain corresponds to 79-100 (KMLTNLGLNKRKTISFVPCTMQ). The cysteines at positions 97 and 189 are disulfide-linked. The chain crosses the membrane as a helical span at residues 101–120 (TFLYMAFAHTECLILVMMSY). Topologically, residues 121 to 139 (DRYMAICHPLQYSVIMRWG) are cytoplasmic. Residues 140–158 (VCTVLAVTSWACGSLLALV) traverse the membrane as a helical segment. The Extracellular segment spans residues 159–196 (HVVLILRLPFCGPHEINHFFCEILSVLKLACADTWLNQ). A helical transmembrane segment spans residues 197-219 (VVIFAASVFILVGPLCLVLVSYS). Residues 220-236 (RILAAILRIQSGEGRRK) lie on the Cytoplasmic side of the membrane. Residues 237–259 (AFSTCSSHLCMVGLFFGSAIVMY) form a helical membrane-spanning segment. Residues 260–272 (MAPKSRHPEEQQK) are Extracellular-facing. The chain crosses the membrane as a helical span at residues 273-292 (VLSLFYSLFNPMLNPLIYSL). Over 293–311 (RNAEVKGALKRVLWKQRSK) the chain is Cytoplasmic.

The protein belongs to the G-protein coupled receptor 1 family.

The protein resides in the cell membrane. Odorant receptor. The sequence is that of Olfactory receptor 2A5 (OR2A5) from Homo sapiens (Human).